The chain runs to 37 residues: Large ribosomal subunit protein bL36 (37 aa).

This sequence belongs to the bacterial ribosomal protein bL36 family.

This chain is Large ribosomal subunit protein bL36, found in Legionella pneumophila subsp. pneumophila (strain Philadelphia 1 / ATCC 33152 / DSM 7513).